Consider the following 170-residue polypeptide: Cyclic pyranopterin monophosphate synthase (170 aa).

Substrate is bound by residues 89 to 91 and 125 to 126; these read LCH and ME. Residue Asp140 is part of the active site.

This sequence belongs to the MoaC family. As to quaternary structure, homohexamer; trimer of dimers.

It catalyses the reaction (8S)-3',8-cyclo-7,8-dihydroguanosine 5'-triphosphate = cyclic pyranopterin phosphate + diphosphate. It functions in the pathway cofactor biosynthesis; molybdopterin biosynthesis. Its function is as follows. Catalyzes the conversion of (8S)-3',8-cyclo-7,8-dihydroguanosine 5'-triphosphate to cyclic pyranopterin monophosphate (cPMP). The polypeptide is Cyclic pyranopterin monophosphate synthase (Streptomyces coelicolor (strain ATCC BAA-471 / A3(2) / M145)).